The chain runs to 209 residues: Cerebral peptide 1 (209 aa).

Residues 1–20 (MLLAKISVVVLLLAIDGTSS) form the signal peptide. Over residues 21–39 (SESTDNVVLSSSPDSQKAA) the composition is skewed to polar residues. The propeptide at 21–43 (SESTDNVVLSSSPDSQKAATSRH) is connecting peptide 1. The interval 21 to 56 (SESTDNVVLSSSPDSQKAATSRHKRAPGWGKRSSLN) is disordered. W49 carries the tryptophan amide modification. A propeptide spans 53–77 (SSLNDEDLFADSDSAQELLDSVAAL) (connecting peptide 2). Tryptophan amide is present on residues W83 and W105. Positions 98–169 (EAKRAPGWGK…APGWGKRSGG (72 aa)) are disordered. The propeptide at 109–122 (GQEIDVDEDGSEQE) is connecting peptide 4. A tryptophan amide mark is found at W128, W135, W142, W149, W156, and W163. A propeptide spans 167-191 (SGGDYCETLEKMVDAYIYKAVEVDS) (connecting peptide 5). C172 and C197 form a disulfide bridge.

Homodimer; disulfide-linked. As to expression, cerebral peptide 1 is expressed in the cerebral, pedal and buccal ganglia and B1 and B2 neurons. APGW-amide is expressed in buccal ganglia and several neurons.

It localises to the secreted. May function as a peptide transmitter. This Aplysia californica (California sea hare) protein is Cerebral peptide 1.